Reading from the N-terminus, the 330-residue chain is tRNA U34 carboxymethyltransferase (330 aa).

Carboxy-S-adenosyl-L-methionine is bound by residues Lys-91, Trp-105, Lys-110, Gly-130, 152-154, 181-182, Met-196, Tyr-200, and Arg-315; these read DPS and IE.

This sequence belongs to the class I-like SAM-binding methyltransferase superfamily. CmoB family. In terms of assembly, homotetramer.

The catalysed reaction is carboxy-S-adenosyl-L-methionine + 5-hydroxyuridine(34) in tRNA = 5-carboxymethoxyuridine(34) in tRNA + S-adenosyl-L-homocysteine + H(+). In terms of biological role, catalyzes carboxymethyl transfer from carboxy-S-adenosyl-L-methionine (Cx-SAM) to 5-hydroxyuridine (ho5U) to form 5-carboxymethoxyuridine (cmo5U) at position 34 in tRNAs. The polypeptide is tRNA U34 carboxymethyltransferase (Shewanella oneidensis (strain ATCC 700550 / JCM 31522 / CIP 106686 / LMG 19005 / NCIMB 14063 / MR-1)).